A 309-amino-acid polypeptide reads, in one-letter code: Aspartate carbamoyltransferase catalytic subunit (309 aa).

Residues R55 and T56 each contribute to the carbamoyl phosphate site. K85 is an L-aspartate binding site. Residues R106, H135, and Q138 each coordinate carbamoyl phosphate. Residues R168 and R230 each contribute to the L-aspartate site. L268 and P269 together coordinate carbamoyl phosphate.

This sequence belongs to the aspartate/ornithine carbamoyltransferase superfamily. ATCase family. Heterododecamer (2C3:3R2) of six catalytic PyrB chains organized as two trimers (C3), and six regulatory PyrI chains organized as three dimers (R2).

The catalysed reaction is carbamoyl phosphate + L-aspartate = N-carbamoyl-L-aspartate + phosphate + H(+). The protein operates within pyrimidine metabolism; UMP biosynthesis via de novo pathway; (S)-dihydroorotate from bicarbonate: step 2/3. In terms of biological role, catalyzes the condensation of carbamoyl phosphate and aspartate to form carbamoyl aspartate and inorganic phosphate, the committed step in the de novo pyrimidine nucleotide biosynthesis pathway. The sequence is that of Aspartate carbamoyltransferase catalytic subunit from Photobacterium profundum (strain SS9).